Consider the following 433-residue polypeptide: MTSAFYGGDEVSAIVIDPGSKWTRIGFSGEDIPKCVLPSYCGEFSDGRRLFGEEYIYKSNPGMEIKNAIRNGWVENWDVTVDLWRYGLEQQLKTNPLEHPILITEPFDNPPENRVKTLETMFESLRCPATYLAKQETCAAFASGKGTACLVDIGAERSSVSAIYDGFVLQKGYQVQHFSGNAINDILAQTLRDKNFEVMPKYLVKSKNPVEIGQPANCELRPRDTTDSYHQFQVQRVYDEWKEECALISDVPFSSETTIAESEFEFPDGSRMMFGAERYQIPEHLFVPGSDEEMNEEPSKPIEQTENNEVSQQDSSVTNTSSRILGIPQLFQNCISECDVDIRASLLNNVIVCGGTSLMQGFSLRLQNELSKLYPGSRLKIHASGHVVERSYASWLGGSILSSLGTFHQLWISRQEYEEHGSDRLALIEKRCK.

A disordered region spans residues 289-317 (GSDEEMNEEPSKPIEQTENNEVSQQDSSV). Over residues 302 to 317 (IEQTENNEVSQQDSSV) the composition is skewed to polar residues.

It belongs to the actin family. ARP4 subfamily. In terms of assembly, component of the NuA4 histone acetyltransferase complex, of the INO80 chromatin remodeling complex, and of the SWR1 chromatin remodeling complex.

It localises to the nucleus. Chromatin interaction component of the NuA4 histone acetyltransferase complex which is involved in transcriptional activation of selected genes principally by acetylation of nucleosomal histone H4 and H2A. The NuA4 complex is also involved in DNA repair. Is required for NuA4 complex integrity. Component of the SWR1 complex which mediates the ATP-dependent exchange of histone H2A for the H2A variant HZT1 leading to transcriptional regulation of selected genes by chromatin remodeling. Component of the INO80 complex which remodels chromatin by shifting nucleosomes and is involved in DNA repair. The protein is Actin-related protein 4 (alp5) of Schizosaccharomyces pombe (strain 972 / ATCC 24843) (Fission yeast).